The sequence spans 574 residues: Glutamyl-tRNA(Gln) amidotransferase subunit B, mitochondrial (574 aa).

Belongs to the GatB/GatE family. GatB subfamily. As to quaternary structure, subunit of the heterotrimeric GatCAB amidotransferase (AdT) complex, composed of A, B and C subunits.

Its subcellular location is the mitochondrion. The enzyme catalyses L-glutamyl-tRNA(Gln) + L-glutamine + ATP + H2O = L-glutaminyl-tRNA(Gln) + L-glutamate + ADP + phosphate + H(+). Allows the formation of correctly charged Gln-tRNA(Gln) through the transamidation of misacylated Glu-tRNA(Gln) in the mitochondria. The reaction takes place in the presence of glutamine and ATP through an activated gamma-phospho-Glu-tRNA(Gln). This is Glutamyl-tRNA(Gln) amidotransferase subunit B, mitochondrial from Phytophthora infestans (strain T30-4) (Potato late blight agent).